The following is a 450-amino-acid chain: Probable glycine dehydrogenase (decarboxylating) subunit 1 (450 aa).

This sequence belongs to the GcvP family. N-terminal subunit subfamily. As to quaternary structure, the glycine cleavage system is composed of four proteins: P, T, L and H. In this organism, the P 'protein' is a heterodimer of two subunits.

It catalyses the reaction N(6)-[(R)-lipoyl]-L-lysyl-[glycine-cleavage complex H protein] + glycine + H(+) = N(6)-[(R)-S(8)-aminomethyldihydrolipoyl]-L-lysyl-[glycine-cleavage complex H protein] + CO2. Its function is as follows. The glycine cleavage system catalyzes the degradation of glycine. The P protein binds the alpha-amino group of glycine through its pyridoxal phosphate cofactor; CO(2) is released and the remaining methylamine moiety is then transferred to the lipoamide cofactor of the H protein. This is Probable glycine dehydrogenase (decarboxylating) subunit 1 from Desulfotalea psychrophila (strain LSv54 / DSM 12343).